Here is a 103-residue protein sequence, read N- to C-terminus: Large ribosomal subunit protein bL21 (103 aa).

It belongs to the bacterial ribosomal protein bL21 family. As to quaternary structure, part of the 50S ribosomal subunit. Contacts protein L20.

Its function is as follows. This protein binds to 23S rRNA in the presence of protein L20. The chain is Large ribosomal subunit protein bL21 from Delftia acidovorans (strain DSM 14801 / SPH-1).